The sequence spans 273 residues: Large ribosomal subunit protein uL2cy (273 aa).

Disordered stretches follow at residues 1–27 (MAIH…SNPR) and 224–273 (NPVD…RRRK).

Belongs to the universal ribosomal protein uL2 family. In terms of assembly, part of the 50S ribosomal subunit.

Its subcellular location is the plastid. The protein localises to the chloroplast. The sequence is that of Large ribosomal subunit protein uL2cy (rpl2-B) from Liriodendron tulipifera (Tuliptree).